A 131-amino-acid polypeptide reads, in one-letter code: 23S rRNA-specific endonuclease VapC20 (131 aa).

Positions 2–125 constitute a PINc domain; it reads IFVDTSFWAA…FDGDFSAAGF (124 aa). Mg(2+) contacts are provided by Asp5 and Asp98.

It belongs to the PINc/VapC protein family. The cofactor is Mg(2+).

Functionally, toxic component of a type II toxin-antitoxin (TA) system. An endoribonuclease that cleaves 23S rRNA in the sarcin-ricin loop (SRL). The SRL sequence is highly conserved and is implicated in GTP hydrolysis by EF-Tu and EF-G. Acts on purified ribosomes but not on isolated RNA. Its toxic effect is neutralized by coexpression with cognate antitoxin VapB20. The sequence is that of 23S rRNA-specific endonuclease VapC20 (vapC20) from Mycobacterium tuberculosis (strain CDC 1551 / Oshkosh).